The following is a 535-amino-acid chain: Probable glucomannan 4-beta-mannosyltransferase 14 (535 aa).

Residues 42–62 (QVVSVLLFVDAAYMAIVVAIV) traverse the membrane as a helical segment. Aspartate 131 is a catalytic residue. Substrate-binding residues include aspartate 193 and aspartate 195. Aspartate 287 is a catalytic residue. Transmembrane regions (helical) follow at residues 366–386 (IVVH…TVIF), 403–423 (ITIL…YWIL), 482–502 (IMVG…GRTY), and 503–523 (LYVY…GYVG).

The protein belongs to the glycosyltransferase 2 family. Plant cellulose synthase-like A subfamily.

The protein localises to the golgi apparatus membrane. The catalysed reaction is GDP-mannose + (glucomannan)n = GDP + (glucomannan)n+1.. Probable mannan synthase which consists of a 4-beta-mannosyltransferase activity on mannan using GDP-mannose. The beta-1,4-mannan product is the backbone for galactomannan synthesis by galactomannan galactosyltransferase. Galactomannan is a noncellulosic polysaccharides of plant cell wall. This chain is Probable glucomannan 4-beta-mannosyltransferase 14, found in Arabidopsis thaliana (Mouse-ear cress).